Reading from the N-terminus, the 201-residue chain is Large ribosomal subunit protein uL18 (201 aa).

It belongs to the universal ribosomal protein uL18 family. In terms of assembly, part of the 50S ribosomal subunit. Contacts the 5S and 23S rRNAs.

Its function is as follows. This is one of the proteins that bind and probably mediate the attachment of the 5S RNA into the large ribosomal subunit, where it forms part of the central protuberance. The polypeptide is Large ribosomal subunit protein uL18 (Thermococcus kodakarensis (strain ATCC BAA-918 / JCM 12380 / KOD1) (Pyrococcus kodakaraensis (strain KOD1))).